Reading from the N-terminus, the 296-residue chain is MSTVDFGRVITAMVTPFHPDMSVNYTQAKKLSRYLVENGSDGLVVSGTTGESPTLNKDEKIQLFKAVVEEVGGQATVIAGTGSYDTASSIILTKEAEKVGCDGVMLVAPYYNKPSQEGLYQHFRTIAECTSLPVMLYNIPGRTGINVLPATVERLAKDVPNIVAIKEAAGDINQVSELRRILPEDFIIFSGDDSLTLPMLSLGCKGIVSVAAHIAGKQIQEMIDAFTSGNTTLAANLHKELFPIFKGLFITSNPVPVKAALNLKGLAVGGVRLPLVEATAKEIETVKNIMNNLHLL.

A pyruvate-binding site is contributed by Thr49. Tyr137 acts as the Proton donor/acceptor in catalysis. The active-site Schiff-base intermediate with substrate is Lys166. Val208 is a binding site for pyruvate.

It belongs to the DapA family. Homotetramer; dimer of dimers.

It is found in the cytoplasm. The catalysed reaction is L-aspartate 4-semialdehyde + pyruvate = (2S,4S)-4-hydroxy-2,3,4,5-tetrahydrodipicolinate + H2O + H(+). The protein operates within amino-acid biosynthesis; L-lysine biosynthesis via DAP pathway; (S)-tetrahydrodipicolinate from L-aspartate: step 3/4. Its function is as follows. Catalyzes the condensation of (S)-aspartate-beta-semialdehyde [(S)-ASA] and pyruvate to 4-hydroxy-tetrahydrodipicolinate (HTPA). The chain is 4-hydroxy-tetrahydrodipicolinate synthase from Desulforamulus reducens (strain ATCC BAA-1160 / DSM 100696 / MI-1) (Desulfotomaculum reducens).